The chain runs to 5088 residues: Replicase polyprotein 1ab (5088 aa).

A helical transmembrane segment spans residues Val-26–Ile-46. The interval Glu-301–Gln-323 is disordered. Transmembrane regions (helical) follow at residues His-343 to Thr-363, Gly-1132 to Ile-1152, Thr-1156 to Leu-1176, Tyr-1201 to Ile-1221, and Ile-1250 to Val-1270. Residues His-1434 and Cys-1539 each act as for 3C-like proteinase in the active site. 2 helical membrane passes run Phe-1729–Val-1749 and Ile-1758–Val-1778. Residues Lys-3093 to Ala-3112 are disordered. The region spanning Met-4351–Val-4616 is the ExoN domain. Residues Asp-4362, Glu-4364, and Asp-4481 contribute to the active site. Zn(2+)-binding residues include Cys-4498, Cys-4504, Cys-4522, and His-4525. Active-site residues include His-4599, Asp-4604, Lys-4880, Asp-4969, Lys-4998, and Glu-5035. Residues Leu-4844–Lys-5088 enclose the Nidovirus-type SAM-dependent 2'-O-MTase domain.

As to quaternary structure, homodimer. Specific enzymatic cleavages in vivo by its own protease yield mature proteins. 3CL-PRO is autocatalytically processed.

The protein localises to the membrane. It carries out the reaction a 5'-end (5'-triphosphoguanosine)-ribonucleoside in mRNA + S-adenosyl-L-methionine = a 5'-end (N(7)-methyl 5'-triphosphoguanosine)-ribonucleoside in mRNA + S-adenosyl-L-homocysteine. The catalysed reaction is RNA(n) + a ribonucleoside 5'-triphosphate = RNA(n+1) + diphosphate. The enzyme catalyses ATP + H2O = ADP + phosphate + H(+). It catalyses the reaction a 5'-end (N(7)-methyl 5'-triphosphoguanosine)-ribonucleoside in mRNA + S-adenosyl-L-methionine = a 5'-end (N(7)-methyl 5'-triphosphoguanosine)-(2'-O-methyl-ribonucleoside) in mRNA + S-adenosyl-L-homocysteine + H(+). In terms of biological role, cysteine protease responsible for the majority of cleavages of the polyprotein. Recognizes substrates containing the core sequence [NT]-[EHKQSY]-|-[AGNST]. The helicase which contains a zinc finger structure displays RNA and DNA duplex-unwinding activities with 5' to 3' polarity. Its function is as follows. RNA-directed RNA polymerase that catalyzes the transcription of viral genomic and subgenomic RNAs. Functionally, catalyzes the RNA N7-guanylyltransferase reaction to methylate the core cap structure GpppN-RNA into the type-0 cap (m)GpppN-RNA. In Ochlerotatus harrisoni (CAVV), this protein is Replicase polyprotein 1ab.